Reading from the N-terminus, the 222-residue chain is MNQMLPEQLLNQLNLVEKALAALRNGQGVLVADDPGRENEADLIFPAESVTIPQMALLIRECSGIVCLCMTDGKIRSLELPMMVENNTSGFQTAFTVSIEAAEGVTTGVSAADRVKTVRTAVSENARPSDLRHPGHIFPLRARPGGVLERPGHTEATVDLMRLAGLSPAGVLCELTNPDGSMAGIEETFAFSVQHGFPVLSIGDIVAYRKSLLQTGSQGLSA.

D-ribulose 5-phosphate is bound by residues 37-38, D42, 150-154, and E174; these read RE and RPGHT. Mg(2+) is bound at residue E38. H153 is a Mg(2+) binding site.

This sequence belongs to the DHBP synthase family. In terms of assembly, homodimer. Mg(2+) is required as a cofactor. The cofactor is Mn(2+).

It catalyses the reaction D-ribulose 5-phosphate = (2S)-2-hydroxy-3-oxobutyl phosphate + formate + H(+). It functions in the pathway cofactor biosynthesis; riboflavin biosynthesis; 2-hydroxy-3-oxobutyl phosphate from D-ribulose 5-phosphate: step 1/1. In terms of biological role, catalyzes the conversion of D-ribulose 5-phosphate to formate and 3,4-dihydroxy-2-butanone 4-phosphate. This Chlorobium limicola (strain DSM 245 / NBRC 103803 / 6330) protein is 3,4-dihydroxy-2-butanone 4-phosphate synthase.